Consider the following 308-residue polypeptide: Glutamyl-Q tRNA(Asp) synthetase (308 aa).

Residues R19 to S23 and E55 each bind L-glutamate. The 'HIGH' region motif lies at P22 to S32. Residues C111, C113, Y125, and C129 each contribute to the Zn(2+) site. Y182 and R200 together coordinate L-glutamate. Residues K238–Q242 carry the 'KMSKS' region motif. Residue K241 coordinates ATP.

Belongs to the class-I aminoacyl-tRNA synthetase family. GluQ subfamily. Zn(2+) is required as a cofactor.

Catalyzes the tRNA-independent activation of glutamate in presence of ATP and the subsequent transfer of glutamate onto a tRNA(Asp). Glutamate is transferred on the 2-amino-5-(4,5-dihydroxy-2-cyclopenten-1-yl) moiety of the queuosine in the wobble position of the QUC anticodon. The protein is Glutamyl-Q tRNA(Asp) synthetase of Escherichia coli O157:H7.